Here is a 35-residue protein sequence, read N- to C-terminus: Cecropin-A (35 aa).

A Leucine amide modification is found at Leu-35.

As to quaternary structure, monomer. In terms of tissue distribution, hemolymph.

The protein resides in the secreted. Cecropins have lytic and antibacterial activity against several Gram-positive and Gram-negative bacteria. Also has activity against fungi. The protein is Cecropin-A of Heliothis virescens (Tobacco budworm moth).